The sequence spans 914 residues: MAYQGTGNHSPPGYDDGGHRLQDLPAGNNYEEEASRGLLSSQTGPFTGPFDDPQQRNLSPARPTSGYSLTETYAADAGYHDPYSAGGSVYSAQSGENPATAFGVPGRVASPYARSETSSTEAWRQRQAPGGAGSGGGGGLRRYATRKVKLVQGSVLSVDYPVPSAIQNAIQAKYRNDLEGGSEEFTHMRYTAATCDPNEFTLHNGYNLRPAMYNRHTELLIAITYYNEDKTLTARTLHGVMQNIRDIVNLKKSEFWNKGGPAWQKIVVCLVFDGIDPCDKDVLDVLATVGIYQDGVMKRDVDGKETVAHIFEYTTQLSVTPNQQLIRPTDDGPSTLPPVQMMFCLKQKNSKKINSHRWLFNAFGRILNPEVCILLDAGTKPGHKSLLALWEAFYNDKDLGGACGEIHAMLGKGWRNLINPLVAAQNFEYKISNILDKPLESSFGYVSVLPGAFSAYRFRAIMGRPLEQYFHGDHTLSKQLGKKGIEGMNIFKKNMFLAEDRILCFELVAKAGSKWHLSYVKASKGETDVPEGAAEFISQRRRWLNGSFAAGIYSLMHFGRMYKSGHNIIRMFFLHIQMLYNTFSTILTWFSLASYWLTTSVIMDLVGTPSASNGHTGFPFGKTATPIVNTIVKYAYLGFLLLQFILALGNRPKGSRFSYLASFVVFGIIQLYVVVDALYLVVRAFSGSAPMDFDTTHGVGAFLGSFFGSTGAGIIIIALAATFGLYFVASFMYMDPWHMFTSFPQYMAVQSSYINILNVYAFSNWHDVSWGTKGSDKADALPSAKTTKEGGKETVIEEIDKPQADIDSQFEATVKRALTPYVAPVEKDEKSLDDSYKSFRTRLVTFWIFSNALMAVCITSDGVDKFGFTNSATDRTSRFFQALLWSNAVVALFRFIGACWFLGKTGVMCCFARR.

Disordered regions lie at residues 1 to 67 (MAYQ…TSGY) and 112 to 140 (YARS…GGGL). Positions 130–140 (GGAGSGGGGGL) are enriched in gly residues. 7 consecutive transmembrane segments (helical) span residues 543–562 (WLNG…GRMY), 586–606 (ILTW…MDLV), 627–647 (IVNT…FILA), 662–682 (SFVV…YLVV), 712–732 (AGII…ASFM), 843–863 (LVTF…SDGV), and 882–902 (ALLW…CWFL).

It belongs to the chitin synthase family. Class III subfamily.

Its subcellular location is the cell membrane. It catalyses the reaction [(1-&gt;4)-N-acetyl-beta-D-glucosaminyl](n) + UDP-N-acetyl-alpha-D-glucosamine = [(1-&gt;4)-N-acetyl-beta-D-glucosaminyl](n+1) + UDP + H(+). Its function is as follows. Polymerizes chitin, a structural polymer of the cell wall and septum, by transferring the sugar moiety of UDP-GlcNAc to the non-reducing end of the growing chitin polymer. Plays an important role in septal growth or maintenance. Mediates colony spore formation. This chain is Chitin synthase B, found in Aspergillus niger (strain ATCC MYA-4892 / CBS 513.88 / FGSC A1513).